An 88-amino-acid polypeptide reads, in one-letter code: Small ribosomal subunit protein bS16 (88 aa).

This sequence belongs to the bacterial ribosomal protein bS16 family.

The chain is Small ribosomal subunit protein bS16 from Halothermothrix orenii (strain H 168 / OCM 544 / DSM 9562).